We begin with the raw amino-acid sequence, 513 residues long: 2-isopropylmalate synthase (513 aa).

A Pyruvate carboxyltransferase domain is found at 4-268; sequence IKIFDTTLRD…ETGIKTELIY (265 aa). Residues Asp13, His203, His205, and Asn239 each coordinate Mn(2+). The regulatory domain stretch occupies residues 392–513; it reads KLVHFHVHTG…GLLRKNGGAE (122 aa).

This sequence belongs to the alpha-IPM synthase/homocitrate synthase family. LeuA type 1 subfamily. In terms of assembly, homodimer. The cofactor is Mn(2+).

Its subcellular location is the cytoplasm. The catalysed reaction is 3-methyl-2-oxobutanoate + acetyl-CoA + H2O = (2S)-2-isopropylmalate + CoA + H(+). Its pathway is amino-acid biosynthesis; L-leucine biosynthesis; L-leucine from 3-methyl-2-oxobutanoate: step 1/4. In terms of biological role, catalyzes the condensation of the acetyl group of acetyl-CoA with 3-methyl-2-oxobutanoate (2-ketoisovalerate) to form 3-carboxy-3-hydroxy-4-methylpentanoate (2-isopropylmalate). This Thermotoga petrophila (strain ATCC BAA-488 / DSM 13995 / JCM 10881 / RKU-1) protein is 2-isopropylmalate synthase.